A 367-amino-acid polypeptide reads, in one-letter code: Choline-phosphate cytidylyltransferase A (367 aa).

N-acetylmethionine is present on M1. Residues 1–31 are disordered; that stretch reads MDAQSSAKVNSRKRRKEVPGPNGATEEDGIP. Residue K8 is modified to N6-acetyllysine. CTP is bound by residues I84, F85, H92, and K122. 2 residues coordinate phosphocholine: K122 and W151. CTP is bound by residues H168, D169, Y173, Q195, R196, T197, and I200. Amphipathic stretches follow at residues 228-287 and 298-315; these read KELN…EFIG and ALKHMLKEGKGRMLQAIS. A Phosphoserine modification is found at S233. The segment at 272-293 is autoinhibitory (AI); the sequence is IDLIQKWEEKSREFIGSFLEMF. The interval 313–367 is disordered; the sequence is AISPKQSPSSSPTHERSPSPSFRWPFSGKTSPSSSPASLSRCKAVTCDISEDEED. A Phosphoserine; by PKC modification is found at S315. A compositionally biased stretch (polar residues) spans 315 to 324; that stretch reads SPKQSPSSSP. S319, S321, S322, and S323 each carry phosphoserine. The stretch at 319–324 is repeat 1; it reads SPSSSP. A 3 X repeats region spans residues 319-348; sequence SPSSSPTHERSPSPSFRWPFSGKTSPSSSP. Phosphothreonine is present on T325. S329 and S331 each carry phosphoserine. The 2; approximate repeat unit spans residues 329–333; it reads SPSPS. Residues 330 to 352 show a composition bias toward low complexity; it reads PSPSFRWPFSGKTSPSSSPASLS. The residue at position 333 (S333) is a Phosphoserine; by PKC. T342 is modified (phosphothreonine). A phosphoserine mark is found at S343, S345, S346, S347, S350, and S352. Copy 3 of the repeat occupies 343 to 348; the sequence is SPSSSP. A Phosphothreonine modification is found at T358. S362 carries the post-translational modification Phosphoserine; by CK2.

Belongs to the cytidylyltransferase family. As to quaternary structure, homodimer. Post-translationally, the serine residues of the C-terminus are phosphorylated. The inactive soluble form is stabilized by phosphorylation, the active membrane bound form is promoted by anionic lipids or diacylglycerol, and is stabilized by dephosphorylation. The N-terminus is blocked. In terms of processing, monoubiquitinated by the SCF(FBXL2) complex, leading to proteasomal degradation.

The protein localises to the cytoplasm. It is found in the cytosol. The protein resides in the membrane. It localises to the endoplasmic reticulum membrane. Its subcellular location is the nucleus. The catalysed reaction is phosphocholine + CTP + H(+) = CDP-choline + diphosphate. The protein operates within phospholipid metabolism; phosphatidylcholine biosynthesis; phosphatidylcholine from phosphocholine: step 1/2. With respect to regulation, interconverts between an inactive cytosolic form and an active membrane-bound form. Activation involves disruption of an inhibitory interaction between helices at the base of the active site and the autoinhibitory (AI) region. Activated by N-methylethanolamine. Activated by oleic acid-containing phosphatidylcholine vesicles. Catalyzes the key rate-limiting step in the CDP-choline pathway for phosphatidylcholine biosynthesis. The chain is Choline-phosphate cytidylyltransferase A (Pcyt1a) from Rattus norvegicus (Rat).